Consider the following 204-residue polypeptide: Tat proofreading chaperone DmsD (204 aa).

This sequence belongs to the TorD/DmsD family. DmsD subfamily.

Functionally, required for biogenesis/assembly of DMSO reductase, but not for the interaction of the DmsA signal peptide with the Tat system. May be part of a chaperone cascade complex that facilitates a folding-maturation pathway for the substrate protein. This chain is Tat proofreading chaperone DmsD, found in Escherichia coli O157:H7.